Reading from the N-terminus, the 453-residue chain is Protein LIAT1 (453 aa).

Residues 1–152 (METRGPGLAV…HLPSDSSTVS (152 aa)) are disordered. The interval 82 to 103 (KRKVKKKKRKKKTKGSGKGDDK) is lysine-rich domain. A compositionally biased stretch (basic residues) spans 83–96 (RKVKKKKRKKKTKG). A compositionally biased stretch (low complexity) spans 106 to 117 (SQSLKSQPLSSS). Over residues 125 to 145 (CKERGPKPEHRQSKVEKKHLP) the composition is skewed to basic and acidic residues. The interaction with ATE1 stretch occupies residues 145–197 (PSDSSTVSLPDFAEIENLANRINESLRWDGILADPEAEKERIRIYKLNRRKRY). 20 repeat units span residues 201–210 (ALKGFHPDPE), 211–220 (ALKGFHPDPD), 221–230 (ALKGFHPDPE), 231–240 (ALKGFHPDPE), 241–250 (ALKGFHPDPE), 251–260 (ALKGFHPDPE), 261–270 (ALKGIHPDPE), 271–280 (ALKGIHPDPE), 281–290 (ALKGFHPDPE), 291–300 (ALKGFHPDPE), 301–310 (ALKGFHTDPE), 311–320 (ALKGFHIDPE), 321–330 (ALKGFHPDPK), 331–340 (ALKGFHPDPK), 341–350 (ALKGFHTDPE), 351–360 (ALKGFHPDPK), 361–370 (ALKGFHPDPE), 371–380 (ALKGFHPDPE), 381–390 (ALKGFHPDPE), and 391–400 (ALKGFHTDPN). Positions 201–400 (ALKGFHPDPE…ALKGFHTDPN (200 aa)) are 20 X 10 AA approximate tandem repeat of A-L-K-G-F-H-P-D-P-E. Disordered regions lie at residues 225–306 (FHPD…KGFH) and 320–432 (EALK…CPNL). Basic and acidic residues predominate over residues 320–396 (EALKGFHPDP…PDPEALKGFH (77 aa)).

As to quaternary structure, self-associates (via Lys-rich domain); targets LIAT1 to the nucleolus. Interacts with ATE1; it is not a substrate of ATE1, the interaction takes place in the cytoplasm and seems to increase ATE1 arginyltransferase activity. Interacts with JMJD6 and MRPS14. In terms of processing, post-translationally modified by JMJD6 lysyl-hydroxylase activity at its Lys-rich domain, which inhibits its self-association and nucleolar localization.

The protein localises to the nucleus. The protein resides in the nucleolus. Its subcellular location is the cytoplasm. In terms of biological role, participates in nucleolar liquid-liquid phase separation (LLPS) through its N-terminal intrinsically disordered region (IDR). May be involved in ATE1-mediated N-terminal arginylation. The chain is Protein LIAT1 from Homo sapiens (Human).